We begin with the raw amino-acid sequence, 359 residues long: Stearoyl-CoA desaturase (359 aa).

Residues 1-72 (MPAHLLQDDI…EGPSPKVEYV (72 aa)) lie on the Cytoplasmic side of the membrane. The chain crosses the membrane as a helical span at residues 73–93 (WRNIILMSLLHLGALYGITLI). Asn75 lines the substrate pocket. Residues 94–97 (PTCK) lie on the Lumenal side of the membrane. A helical membrane pass occupies residues 98 to 118 (FYTWLWGVFYYFVSALGITAG). Topologically, residues 119 to 217 (AHRLWSHRSY…EKLVMFQRRY (99 aa)) are cytoplasmic. Residues His120 and His125 each contribute to the Fe cation site. The Histidine box-1 signature appears at 120–125 (HRLWSH). Substrate is bound by residues Asn148, Arg155, and Asp156. 3 residues coordinate Fe cation: His157, His160, and His161. The Histidine box-2 motif lies at 157–161 (HRAHH). Substrate is bound by residues Arg188 and Lys189. A phosphoserine mark is found at Ser198 and Ser203. A helical membrane pass occupies residues 218–237 (YKPGLLMMCFILPTLVPWYF). The Lumenal portion of the chain corresponds to 238–241 (WGET). The chain crosses the membrane as a helical span at residues 242 to 263 (FQNSVFVATFLRYAVVLNATWL). Substrate is bound at residue Trp262. The Cytoplasmic portion of the chain corresponds to 264–359 (VNSAAHLFGY…RTGDGNYKSG (96 aa)). 4 residues coordinate Fe cation: His269, His298, His301, and His302. A Histidine box-3 motif is present at residues 298–302 (HNYHH).

This sequence belongs to the fatty acid desaturase type 1 family. May self-associate and form homodimers. The cofactor is Fe(2+). Detected in fetal liver, lung and brain. Highly expressed in adult adipose tissue, and at lower levels in adult brain and lung.

It is found in the endoplasmic reticulum membrane. It carries out the reaction octadecanoyl-CoA + 2 Fe(II)-[cytochrome b5] + O2 + 2 H(+) = (9Z)-octadecenoyl-CoA + 2 Fe(III)-[cytochrome b5] + 2 H2O. It catalyses the reaction hexadecanoyl-CoA + 2 Fe(II)-[cytochrome b5] + O2 + 2 H(+) = (9Z)-hexadecenoyl-CoA + 2 Fe(III)-[cytochrome b5] + 2 H2O. Stearoyl-CoA desaturase that utilizes O(2) and electrons from reduced cytochrome b5 to introduce the first double bond into saturated fatty acyl-CoA substrates. Catalyzes the insertion of a cis double bond at the delta-9 position into fatty acyl-CoA substrates including palmitoyl-CoA and stearoyl-CoA. Gives rise to a mixture of 16:1 and 18:1 unsaturated fatty acids. Plays an important role in lipid biosynthesis. Plays an important role in regulating the expression of genes that are involved in lipogenesis and in regulating mitochondrial fatty acid oxidation. Plays an important role in body energy homeostasis. Contributes to the biosynthesis of membrane phospholipids, cholesterol esters and triglycerides. This chain is Stearoyl-CoA desaturase (SCD), found in Homo sapiens (Human).